We begin with the raw amino-acid sequence, 89 residues long: Putative ankyrin repeat protein RF_1157 (89 aa).

Residues 2 to 32 (YNTTPLNFAINQENNEEVIKYLLANGANPRL) form an ANK repeat.

This chain is Putative ankyrin repeat protein RF_1157, found in Rickettsia felis (strain ATCC VR-1525 / URRWXCal2) (Rickettsia azadi).